The chain runs to 217 residues: MAWFFAPEPVMVTADEALKGGRHTVLENPAPHTVLGTPVTGPWKEGQQRIWIGLGCFWGVEQMYWQMDGVEGTSVGYAGGFTPNPTYREVCSGRTGHTEIVEVVYDPSKISLEQLVARGLEAHDPTQGFRQGNDVGTQYRSAYYTENEEGAARVKAVVDAYGETLKQHGFGEITTEIGVISPSEYFLAEDYHQQYLDKNPDGYCPHHSTGIPCGVEA.

Cys56 is a catalytic residue.

This sequence belongs to the MsrA Met sulfoxide reductase family.

It carries out the reaction L-methionyl-[protein] + [thioredoxin]-disulfide + H2O = L-methionyl-(S)-S-oxide-[protein] + [thioredoxin]-dithiol. It catalyses the reaction [thioredoxin]-disulfide + L-methionine + H2O = L-methionine (S)-S-oxide + [thioredoxin]-dithiol. Functionally, has an important function as a repair enzyme for proteins that have been inactivated by oxidation. Catalyzes the reversible oxidation-reduction of methionine sulfoxide in proteins to methionine. This chain is Peptide methionine sulfoxide reductase MsrA, found in Corynebacterium melassecola.